A 161-amino-acid polypeptide reads, in one-letter code: MSYTVIYAGTFDPITNGHLDIITRATKLFAKVIVAVAQNPTKQPLFSLSERTALVAQSCSHLTNVEAVSFSGLLADFARQHHAKALIRGIRGSDDIEYEIQLSQLNNKLADGLETVFLPPAVEWRYLSSTMIREIYYHQGQVNAFVPTAVVQALQNRKNNE.

Residue T10 coordinates substrate. ATP contacts are provided by residues 10–11 (TF) and H18. Substrate-binding residues include K42, L74, and R88. ATP contacts are provided by residues 89 to 91 (GIR), E99, and 124 to 130 (WRYLSST).

Belongs to the bacterial CoaD family. In terms of assembly, homohexamer. Requires Mg(2+) as cofactor.

It is found in the cytoplasm. It carries out the reaction (R)-4'-phosphopantetheine + ATP + H(+) = 3'-dephospho-CoA + diphosphate. The protein operates within cofactor biosynthesis; coenzyme A biosynthesis; CoA from (R)-pantothenate: step 4/5. In terms of biological role, reversibly transfers an adenylyl group from ATP to 4'-phosphopantetheine, yielding dephospho-CoA (dPCoA) and pyrophosphate. In Haemophilus ducreyi (strain 35000HP / ATCC 700724), this protein is Phosphopantetheine adenylyltransferase.